We begin with the raw amino-acid sequence, 100 residues long: Small ribosomal subunit protein uS14 (100 aa).

It belongs to the universal ribosomal protein uS14 family. In terms of assembly, part of the 30S ribosomal subunit. Contacts proteins S3 and S10.

Functionally, binds 16S rRNA, required for the assembly of 30S particles and may also be responsible for determining the conformation of the 16S rRNA at the A site. In Trichormus variabilis (strain ATCC 29413 / PCC 7937) (Anabaena variabilis), this protein is Small ribosomal subunit protein uS14.